The following is a 324-amino-acid chain: Alkanal monooxygenase beta chain (324 aa).

This sequence belongs to the bacterial luciferase oxidoreductase family. In terms of assembly, heterodimer of an alpha and a beta chain.

It carries out the reaction a long-chain fatty aldehyde + FMNH2 + O2 = a long-chain fatty acid + hnu + FMN + H2O + 2 H(+). Light-emitting reaction in luminous bacteria. The specific role of the beta subunit is unknown, but it is absolutely required for bioluminescence activity. The polypeptide is Alkanal monooxygenase beta chain (luxB) (Photorhabdus laumondii subsp. laumondii (strain DSM 15139 / CIP 105565 / TT01) (Photorhabdus luminescens subsp. laumondii)).